A 319-amino-acid polypeptide reads, in one-letter code: Epoxyqueuosine reductase (319 aa).

Aspartate 128 (proton donor) is an active-site residue. The 4Fe-4S ferredoxin-type domain maps to 173–202 (EANDPHPNYCGTCTRCLSACPTAALVEPAV). [4Fe-4S] cluster contacts are provided by cysteine 182, cysteine 185, cysteine 188, cysteine 192, cysteine 208, cysteine 236, cysteine 239, and cysteine 243.

Belongs to the QueG family. Monomer. It depends on cob(II)alamin as a cofactor. [4Fe-4S] cluster serves as cofactor.

The protein localises to the cytoplasm. It carries out the reaction epoxyqueuosine(34) in tRNA + AH2 = queuosine(34) in tRNA + A + H2O. The protein operates within tRNA modification; tRNA-queuosine biosynthesis. Functionally, catalyzes the conversion of epoxyqueuosine (oQ) to queuosine (Q), which is a hypermodified base found in the wobble positions of tRNA(Asp), tRNA(Asn), tRNA(His) and tRNA(Tyr). The polypeptide is Epoxyqueuosine reductase (Gloeobacter violaceus (strain ATCC 29082 / PCC 7421)).